The following is a 343-amino-acid chain: NADP-dependent alkenal double bond reductase P2 (343 aa).

2 residues coordinate substrate: Tyr52 and Tyr79. NADP(+) contacts are provided by residues 164–167 (GAVG), Lys190, Tyr206, Asn230, 252–258 (CGMISQY), 282–284 (FVV), and Asn332.

This sequence belongs to the NADP-dependent oxidoreductase L4BD family. As to quaternary structure, homodimer.

It catalyses the reaction an n-alkanal + NAD(+) = an alk-2-enal + NADH + H(+). The catalysed reaction is an n-alkanal + NADP(+) = an alk-2-enal + NADPH + H(+). Its function is as follows. Catalyzes the reduction of the 7-8 double bond of phenylpropanal substrates, such as p-coumaryl aldehyde and coniferyl aldehyde (in vitro). Has activity towards toxic substrates, such as 4-hydroxy-(2E)-nonenal (in vitro). May play a distinct role in plant antioxidant defense and is possibly involved in NAD(P)/NAD(P)h homeostasis. This is NADP-dependent alkenal double bond reductase P2 (P2) from Arabidopsis thaliana (Mouse-ear cress).